Here is a 358-residue protein sequence, read N- to C-terminus: UPF0421 protein BT9727_2513 (358 aa).

A run of 4 helical transmembrane segments spans residues 19-39, 74-94, 109-129, and 131-151; these read IAVFLTVLVCEFFNIPTIFAV, FTFFLGHQALSYALAAMFTIV, TLTAVAMIPITADHYFTAFLI, and LATTSTGIIVSTVVNFFILPP.

This sequence belongs to the UPF0421 family.

It localises to the cell membrane. This is UPF0421 protein BT9727_2513 from Bacillus thuringiensis subsp. konkukian (strain 97-27).